Here is a 183-residue protein sequence, read N- to C-terminus: Ras-related protein Rap-2a (183 aa).

10–17 (GSGGVGKS) is a GTP binding site. The short motif at 32–40 (YDPTIEDFY) is the Effector region element. GTP contacts are provided by residues 57–61 (DTAGT) and 116–119 (NKVD). S-palmitoyl cysteine attachment occurs at residues Cys176 and Cys177. Residue Cys180 is modified to Cysteine methyl ester. A lipid anchor (S-farnesyl cysteine) is attached at Cys180. A propeptide spans 181 to 183 (NIQ) (removed in mature form).

It belongs to the small GTPase superfamily. Ras family. As to quaternary structure, interacts with PLCE1. Interacts with ARHGAP29, SGSM1, SGSM2 and SGSM3. Interacts (GTP-bound form preferentially) with MAP4K4. Interacts with MINK1. Interacts with cytoskeletal actin. Interacts (GTP-bound form) with RUNDC3A. Interacts (GTP-bound form preferentially) with TNIK (via the CNH domain); the interaction is direct and recruits RAP2A to the E3 ubiquitin ligase NEDD4. Interacts with RGS14; the interaction is GTP-dependent. Ubiquitinated; undergoes 'Lys-63' monoubiquitination and diubiquitination by NEDD4. Multiple lysine residues are probably modified. Ubiquitination requires TNIK, prevents interaction with effectors and inactivates RAP2A. Ubiquitination by the ECS(RAB40B) complex leads to RAP2A localization to lamellipodia plasma membrane, activation, and regulation of sorting at early endosomes for recycling to the lamellipodia plasma membrane. In terms of processing, palmitoylated. Palmitoylation is required for association with recycling endosome membranes and activation of TNIK. As to expression, expressed in granular layer of the cerebellum, forebrain, striatum, layer V of the cortex, olfactory cortex, tubercules, subthalamic and hippocampus, particularly in the CA2 region, to a lesser extent in the CA1 region and the external layer of the dentate gyrus. Expressed in neurons.

The protein localises to the midbody. It localises to the cell projection. It is found in the lamellipodium membrane. Its subcellular location is the golgi apparatus. The protein resides in the recycling endosome membrane. The protein localises to the lysosome. It carries out the reaction GTP + H2O = GDP + phosphate + H(+). Its activity is regulated as follows. Activated by the guanine nucleotide-exchange factors RAPGEF3 and RAPGEF4 in a cAMP-dependent manner. Nucleotide exchange is also specifically stimulated by RAPGEF5, RASGEF1A and RASGEF1B. In terms of biological role, small GTP-binding protein which cycles between a GDP-bound inactive and a GTP-bound active form. In its active form interacts with and regulates several effectors including MAP4K4, MINK1 and TNIK. Part of a signaling complex composed of NEDD4, RAP2A and TNIK which regulates neuronal dendrite extension and arborization during development. More generally, it is part of several signaling cascades and may regulate cytoskeletal rearrangements, cell migration, cell adhesion and cell spreading. This is Ras-related protein Rap-2a from Mus musculus (Mouse).